Reading from the N-terminus, the 78-residue chain is Conotoxin ba1890.8 (78 aa).

An N-terminal signal peptide occupies residues 1–22 (MKTSGRLLFLCLAVGLLLESQA). Positions 23–61 (HPIADAEDATRNVGSDGTSVELSEILERGQDSSAEKGQR) are excised as a propeptide. Residues 25–78 (IADAEDATRNVGSDGTSVELSEILERGQDSSAEKGQRQNDHDVDESGHDIPFPS) form a disordered region. A compositionally biased stretch (polar residues) spans 34 to 43 (NVGSDGTSVE). A compositionally biased stretch (basic and acidic residues) spans 47–72 (ILERGQDSSAEKGQRQNDHDVDESGH). Pyrrolidone carboxylic acid is present on glutamine 62.

The protein belongs to the conotoxin H superfamily. As to expression, expressed by the venom duct.

It localises to the secreted. Its function is as follows. Probable toxin. The chain is Conotoxin ba1890.8 from Conus bayani (Bayan's cone).